The following is a 140-amino-acid chain: Cysteine proteinase inhibitor 1 (140 aa).

Residues 1 to 26 form the signal peptide; the sequence is MRKYRVAGLVAALLVLHSLATPSAQA. One can recognise a Cystatin domain in the interval 48–135; that stretch reads GGVEPVGNEN…KELQEFKPVD (88 aa). Residues 91–95 carry the Secondary area of contact motif; the sequence is QVVAG.

Belongs to the cystatin family. Phytocystatin subfamily.

The protein resides in the secreted. In terms of biological role, there are two distinct cystatins in rice seeds (Oryzacystatin-1 and -2) with different specificities against cysteine proteinases. May be involved in the control of germination by inhibition of endogenous cysteine proteinases. May play a role in defense by inhibiting exogenous proteases such as those present in digestive tracks of insects and nematodes. In Oryza sativa subsp. japonica (Rice), this protein is Cysteine proteinase inhibitor 1.